The primary structure comprises 237 residues: Phosphoserine phosphatase (237 aa).

The active-site Nucleophile is aspartate 30. Residues aspartate 30 and aspartate 32 each coordinate Mg(2+). Aspartate 32 acts as the Proton donor in catalysis. Substrate-binding positions include glutamate 39, arginine 76, 120–121 (SG), and lysine 169. Aspartate 192 provides a ligand contact to Mg(2+). Asparagine 195 is a binding site for substrate.

This sequence belongs to the HAD-like hydrolase superfamily. SerB family. It depends on Mg(2+) as a cofactor.

The catalysed reaction is O-phospho-L-serine + H2O = L-serine + phosphate. The enzyme catalyses O-phospho-D-serine + H2O = D-serine + phosphate. It participates in amino-acid biosynthesis; L-serine biosynthesis; L-serine from 3-phospho-D-glycerate: step 3/3. In terms of biological role, catalyzes the dephosphorylation of phosphoserine (P-Ser) in vitro. Also catalyzes the dephosphorylation of phosphothreonine (P-Thr) in vitro. In Albidiferax ferrireducens (strain ATCC BAA-621 / DSM 15236 / T118) (Rhodoferax ferrireducens), this protein is Phosphoserine phosphatase.